The sequence spans 378 residues: Aminomethyltransferase (378 aa).

The protein belongs to the GcvT family. In terms of assembly, the glycine cleavage system is composed of four proteins: P, T, L and H.

It catalyses the reaction N(6)-[(R)-S(8)-aminomethyldihydrolipoyl]-L-lysyl-[protein] + (6S)-5,6,7,8-tetrahydrofolate = N(6)-[(R)-dihydrolipoyl]-L-lysyl-[protein] + (6R)-5,10-methylene-5,6,7,8-tetrahydrofolate + NH4(+). The glycine cleavage system catalyzes the degradation of glycine. The chain is Aminomethyltransferase from Acidobacterium capsulatum (strain ATCC 51196 / DSM 11244 / BCRC 80197 / JCM 7670 / NBRC 15755 / NCIMB 13165 / 161).